The following is a 277-amino-acid chain: Putative glucose-6-phosphate/phosphate-translocator-like protein 1 (277 aa).

5 helical membrane passes run 8–28 (VLPS…WWAL), 46–66 (LWLT…VSWV), 124–143 (MIGF…RNIF), 153–173 (VSVM…VTPF), and 230–250 (PLKH…FIYS).

This sequence belongs to the TPT transporter family. GPT (TC 2.A.7.9) subfamily.

It is found in the membrane. This chain is Putative glucose-6-phosphate/phosphate-translocator-like protein 1, found in Arabidopsis thaliana (Mouse-ear cress).